Consider the following 170-residue polypeptide: Ribosome maturation factor RimM (170 aa).

The PRC barrel domain maps to 98 to 170 (PDEYYWVDLE…RIVVDWDPEF (73 aa)).

It belongs to the RimM family. Binds ribosomal protein uS19.

It localises to the cytoplasm. In terms of biological role, an accessory protein needed during the final step in the assembly of 30S ribosomal subunit, possibly for assembly of the head region. Essential for efficient processing of 16S rRNA. May be needed both before and after RbfA during the maturation of 16S rRNA. It has affinity for free ribosomal 30S subunits but not for 70S ribosomes. The chain is Ribosome maturation factor RimM from Xylella fastidiosa (strain 9a5c).